The sequence spans 396 residues: L-lactate dehydrogenase (396 aa).

Residues 1 to 380 (MIISAASDYR…TQDSLVQGLG (380 aa)) enclose the FMN hydroxy acid dehydrogenase domain. Y24 contacts substrate. Positions 106 and 127 each coordinate FMN. Residue Y129 participates in substrate binding. T155 serves as a coordination point for FMN. R164 is a substrate binding site. Position 251 (K251) interacts with FMN. H275 acts as the Proton acceptor in catalysis. R278 provides a ligand contact to substrate. 306–330 (DSGIRNGLDVVRMIALGADTVLLGR) is a binding site for FMN.

The protein belongs to the FMN-dependent alpha-hydroxy acid dehydrogenase family. It depends on FMN as a cofactor.

The protein resides in the cell inner membrane. The enzyme catalyses (S)-lactate + A = pyruvate + AH2. Functionally, catalyzes the conversion of L-lactate to pyruvate. Is coupled to the respiratory chain. The protein is L-lactate dehydrogenase of Shigella boydii serotype 18 (strain CDC 3083-94 / BS512).